Consider the following 84-residue polypeptide: U21-theraphotoxin-Cg1a 3 (84 aa).

Positions 1–21 are cleaved as a signal peptide; the sequence is MKVSVLITLAVLGVMFLLTSA. Positions 22-47 are excised as a propeptide; it reads EERGSDQMDSPAWLKSMERIFQSEER. Intrachain disulfides connect Cys-49/Cys-63, Cys-56/Cys-68, and Cys-62/Cys-76. Val-82 is modified (valine amide).

It belongs to the neurotoxin 10 (Hwtx-1) family. 05 (F4a) subfamily. Expressed by the venom gland.

The protein resides in the secreted. Probable ion channel inhibitor. The polypeptide is U21-theraphotoxin-Cg1a 3 (Chilobrachys guangxiensis (Chinese earth tiger tarantula)).